A 369-amino-acid polypeptide reads, in one-letter code: Peptidyl-prolyl cis-trans isomerase D (369 aa).

The PPIase cyclophilin-type domain maps to Y8–I173. TPR repeat units follow at residues V218–Y251, V269–D302, and A306–D339.

Belongs to the cyclophilin-type PPIase family. PPIase D subfamily.

The protein localises to the cytoplasm. The enzyme catalyses [protein]-peptidylproline (omega=180) = [protein]-peptidylproline (omega=0). Its function is as follows. PPIases accelerate the folding of proteins. It catalyzes the cis-trans isomerization of proline imidic peptide bonds in oligopeptides. This chain is Peptidyl-prolyl cis-trans isomerase D (CPR6), found in Eremothecium gossypii (strain ATCC 10895 / CBS 109.51 / FGSC 9923 / NRRL Y-1056) (Yeast).